The primary structure comprises 330 residues: Endo-1,4-beta-xylanase (330 aa).

The 329-residue stretch at 2–330 folds into the GH10 domain; sequence CSSIPSLREV…KPAFWRVVNI (329 aa). Glu-133 functions as the Proton donor in the catalytic mechanism. Glu-240 (nucleophile) is an active-site residue.

It belongs to the glycosyl hydrolase 10 (cellulase F) family. Cytoplasmic xylanase subfamily.

It localises to the cytoplasm. It catalyses the reaction Endohydrolysis of (1-&gt;4)-beta-D-xylosidic linkages in xylans.. The protein operates within glycan degradation; xylan degradation. The chain is Endo-1,4-beta-xylanase (xynA) from Geobacillus stearothermophilus (Bacillus stearothermophilus).